The following is a 257-amino-acid chain: Large ribosomal subunit protein uL2 (257 aa).

The segment at 207–230 (VEHPFGGGNHQHIGKPSTIRRDAP) is disordered.

It belongs to the universal ribosomal protein uL2 family. As to quaternary structure, component of the large ribosomal subunit.

The protein localises to the cytoplasm. Its function is as follows. Component of the large ribosomal subunit. The ribosome is a large ribonucleoprotein complex responsible for the synthesis of proteins in the cell. The sequence is that of Large ribosomal subunit protein uL2 (rpl8) from Danio rerio (Zebrafish).